The following is a 957-amino-acid chain: Nitrite reductase [NAD(P)H] large subunit (957 aa).

Position 44 to 79 (44 to 79 (YDRVHLTEYFAGRSAESLSLVEGDFFTQHGIELRLS)) interacts with FAD. An NAD(+)-binding site is contributed by 193–225 (LREKISELGVGVHTSKATTEIVRNEQGLQLNFR). Cys-423, Cys-425, Cys-457, and Cys-460 together coordinate [2Fe-2S] cluster. Positions 639, 645, 679, and 683 each coordinate [4Fe-4S] cluster. Cys-683 contacts siroheme.

Belongs to the nitrite and sulfite reductase 4Fe-4S domain family. In terms of assembly, homodimer which associates with NirD. The cofactor is siroheme. It depends on [2Fe-2S] cluster as a cofactor. Requires [4Fe-4S] cluster as cofactor. FAD serves as cofactor.

The enzyme catalyses NH4(+) + 3 NADP(+) + 2 H2O = nitrite + 3 NADPH + 5 H(+). It carries out the reaction NH4(+) + 3 NAD(+) + 2 H2O = nitrite + 3 NADH + 5 H(+). Its pathway is nitrogen metabolism; nitrate reduction (assimilation). In Klebsiella oxytoca, this protein is Nitrite reductase [NAD(P)H] large subunit (nasB).